Here is a 351-residue protein sequence, read N- to C-terminus: Tropomodulin-2 (351 aa).

The residue at position 25 (Ser-25) is a Phosphoserine.

It belongs to the tropomodulin family. Binds to the N-terminus of tropomyosin and to actin. As to expression, neuronal-tissue specific.

Its subcellular location is the cytoplasm. The protein localises to the cytoskeleton. Functionally, blocks the elongation and depolymerization of the actin filaments at the pointed end. The Tmod/TM complex contributes to the formation of the short actin protofilament, which in turn defines the geometry of the membrane skeleton. The chain is Tropomodulin-2 (Tmod2) from Mus musculus (Mouse).